The primary structure comprises 191 residues: D-glycero-beta-D-manno-heptose-1,7-bisphosphate 7-phosphatase (191 aa).

Asp-11 acts as the Nucleophile in catalysis. Positions 11 and 13 each coordinate Mg(2+). Substrate is bound by residues Asp-11–Asp-13, Asp-19–Tyr-22, and Thr-53–Ser-56. Asp-13 serves as the catalytic Proton donor. Positions 92, 94, 107, and 109 each coordinate Zn(2+). Residue Arg-110–Lys-111 coordinates substrate. Positions 136 and 137 each coordinate Mg(2+). Residue Lys-137 coordinates substrate.

Belongs to the GmhB family. Monomer. Mg(2+) is required as a cofactor. Requires Zn(2+) as cofactor.

It localises to the cytoplasm. It catalyses the reaction D-glycero-beta-D-manno-heptose 1,7-bisphosphate + H2O = D-glycero-beta-D-manno-heptose 1-phosphate + phosphate. It participates in nucleotide-sugar biosynthesis; ADP-L-glycero-beta-D-manno-heptose biosynthesis; ADP-L-glycero-beta-D-manno-heptose from D-glycero-beta-D-manno-heptose 7-phosphate: step 2/4. It functions in the pathway bacterial outer membrane biogenesis; LPS core biosynthesis. Its function is as follows. Converts the D-glycero-beta-D-manno-heptose 1,7-bisphosphate intermediate into D-glycero-beta-D-manno-heptose 1-phosphate by removing the phosphate group at the C-7 position. The polypeptide is D-glycero-beta-D-manno-heptose-1,7-bisphosphate 7-phosphatase (gmhB) (Escherichia coli O157:H7).